The primary structure comprises 2381 residues: Highly reducing polyketide synthase virA (2381 aa).

Positions 1-420 (MDALHLACHL…GANGHVILES (420 aa)) constitute a Ketosynthase family 3 (KS3) domain. Residues cysteine 171, histidine 306, and histidine 344 each act as for beta-ketoacyl synthase activity in the active site. Residues 535–851 (VFTGQGAQYA…PYSPTLVRKE (317 aa)) are malonyl-CoA:ACP transacylase (MAT) domain. Serine 629 acts as the For malonyltransferase activity in catalysis. An N-terminal hotdog fold region spans residues 920-1064 (HELLGTRATA…GSIRVMESTL (145 aa)). Positions 920–1232 (HELLGTRATA…HLRMNEYTGK (313 aa)) are dehydratase (DH) domain. The 316-residue stretch at 920–1235 (HELLGTRATA…MNEYTGKAPV (316 aa)) folds into the PKS/mFAS DH domain. The active-site Proton acceptor; for dehydratase activity is histidine 952. Residues 1078 to 1235 (HEVWGMSRWY…MNEYTGKAPV (158 aa)) form a C-terminal hotdog fold region. Catalysis depends on aspartate 1144, which acts as the Proton donor; for dehydratase activity. An enoyl reductase (ER) domain region spans residues 1639–1956 (GMTDTIHFQQ…NKDRVGKVVV (318 aa)). The interval 1981–2159 (TYLLVGCLGG…AVSVGLGMIS (179 aa)) is ketoreductase (KR) domain. One can recognise a Carrier domain in the interval 2297 to 2375 (TMLDAILRLT…TLAEFIEEKL (79 aa)). Residue serine 2334 is modified to O-(pantetheine 4'-phosphoryl)serine.

It functions in the pathway secondary metabolite biosynthesis. Its function is as follows. Highly reducing polyketide synthase; part of the gene cluster that mediates the biosynthesis of virensols and trichoxide, fungal natural products that contain or are derived from a salicylaldehyde core. The pathway begins with the synthesis of the reduced chain in virensol C by the highly reducing polyketide synthase virA via condensation of one acetate and 8 malonate units. VirA has interesting programming rules since the first 2 ketides are fully reduced, the 3 following ketides undergo beta-dehydration, and the last 3 ketides are only reduced to beta-hydroxys to yield the trihydroxy portion. The production of aldehyde virensol C by virA alone is surprising, since virA does not contain a reductase (R) domain that is typically associated with reductive product release in HRPKS. The cupin-domain enzyme virC is involved in enhancing virA product turnover. The short-chain dehydrogenase virB then oxidizes the C-7 alcohol of virensol C to a ketone, yielding virensol D. Virensol D is further transformed to salicylaldehyde 5-deoxyaurocitrin by the short-chain dehydrogenase virD. VirD catalyzes the dehydrogenation of C-3 to form the beta-ketone aldehyde, which is followed by the generation of the nucleophilic C-2 that is required for the intramolecular aldol condensation between C-2 and C-7, itself followed by dehydration and aromatization which leads to salicylaldehyde 5-deoxyaurocitrin. While the dehydrogenation of virensol D is definitely catalyzed by virD, the aldol condensation and dehydration may be uncatalyzed or assisted by virD. The short chain dehydrogenase virG then converts salicylaldehyde 5-deoxyaurocitrin into virensol B which is further hydroxylated by the cytochrome P450 monooxygenase virE to yield the hydroquinone virensol A. VirI then may oxidize virensol A to form the quinone, while virH performs the epoxidation. Finally, the two remaining short-chain dehydrogenases, virK and virL, are probably responsible for reducing the ketones to the corresponding alcohols to furnish the epoxycyclohexanol structure in trichoxide. The polypeptide is Highly reducing polyketide synthase virA (Hypocrea virens (strain Gv29-8 / FGSC 10586) (Gliocladium virens)).